The primary structure comprises 237 residues: Phosphoserine phosphatase (237 aa).

The active-site Nucleophile is Asp30. Mg(2+) is bound by residues Asp30 and Asp32. Asp32 functions as the Proton donor in the catalytic mechanism. Residues Glu39, Arg76, 120–121, and Lys169 each bind substrate; that span reads SG. Residue Asp192 coordinates Mg(2+). Asn195 lines the substrate pocket.

The protein belongs to the HAD-like hydrolase superfamily. SerB family. Mg(2+) is required as a cofactor.

The enzyme catalyses O-phospho-L-serine + H2O = L-serine + phosphate. It catalyses the reaction O-phospho-D-serine + H2O = D-serine + phosphate. The protein operates within amino-acid biosynthesis; L-serine biosynthesis; L-serine from 3-phospho-D-glycerate: step 3/3. Its function is as follows. Catalyzes the dephosphorylation of phosphoserine (P-Ser) in vitro. Also catalyzes the dephosphorylation of phosphothreonine (P-Thr) in vitro. This chain is Phosphoserine phosphatase, found in Albidiferax ferrireducens (strain ATCC BAA-621 / DSM 15236 / T118) (Rhodoferax ferrireducens).